A 46-amino-acid chain; its full sequence is Acetylajmalan esterase (46 aa).

Asn39 is a glycosylation site (N-linked (GlcNAc...) asparagine).

It belongs to the 'GDSL' lipolytic enzyme family.

The enzyme catalyses 17-O-acetylajmaline + H2O = ajmaline + acetate + H(+). It carries out the reaction 17-O-acetylnorajmaline + H2O = norajmaline + acetate + H(+). Its function is as follows. Deacetylates 17-O-acetylajmaline and 17-O-acetylnorajmaline, but is inactive toward other acetylated alkaloids. The sequence is that of Acetylajmalan esterase from Rauvolfia verticillata (Common devil-pepper).